The following is a 387-amino-acid chain: MATTKSVLVLIFMILATTSSTFATLGEMVTVLSIDGGGIKGIIPGIILEFLEGQLQKMDNNADARLADYFDVIGGTSTGGLLTAMITTPNENNRPFAAAKDIVPFYFQHGPHIFNSSTGQFFGPKYDGKYLMQVLQEKLGETRVHQALTEVAISSFDIKTNKPVIFTKSNLARSPELDAKMSDICYSTAAAPTYFPPHYFATNTSNGDKYEFNLVDGAVATVADPALLSVSVATRRAEEDPAFASIRSLNYKQLLLLSLGTGTNSEFDKTHTAQETAKWGALQWMLVIQQMTEAASSYMTDYYLSTVFQDLHSQNNYLRVQENALTGTTTKADDASEANMELLVQVGENLLKKPVSKDNPETYEEALKRFAKLLSDRKKFRANKASY.

Residues 1–23 form the signal peptide; sequence MATTKSVLVLIFMILATTSSTFA. One can recognise a PNPLA domain in the interval 32-230; sequence LSIDGGGIKG…TVADPALLSV (199 aa). A GXGXXG motif is present at residues 36–41; sequence GGGIKG. Residues 75 to 79 carry the GXSXG motif; the sequence is GTSTG. S77 (nucleophile) is an active-site residue. N-linked (GlcNAc...) asparagine glycans are attached at residues N115 and N203. D216 (proton acceptor) is an active-site residue. A DGA/G motif is present at residues 216–218; sequence DGA.

This sequence belongs to the patatin family. Tuber.

It is found in the vacuole. Functionally, probable lipolytic acyl hydrolase (LAH), an activity which is thought to be involved in the response of tubers to pathogens. The chain is Patatin-03 from Solanum tuberosum (Potato).